Consider the following 147-residue polypeptide: Hemoglobin subunit beta (147 aa).

The Globin domain maps to 2-147; sequence HWEDAEKQYI…ISHSLGREYH (146 aa). Heme b contacts are provided by His63 and His92.

It belongs to the globin family. As to quaternary structure, heterotetramer of two alpha chains and two beta chains. Red blood cells.

In terms of biological role, involved in oxygen transport from the lung to the various peripheral tissues. The sequence is that of Hemoglobin subunit beta (HBB) from Lepidosiren paradoxus (South American lungfish).